Reading from the N-terminus, the 273-residue chain is Phycocyanobilin lyase subunit alpha (273 aa).

This sequence belongs to the CpcE/RpcE/PecE family. CpcE and CpcF associate to form a lyase.

Functionally, required for the chromophorylation of the cpcA gene product. The chain is Phycocyanobilin lyase subunit alpha (cpcE) from Synechococcus elongatus (strain ATCC 33912 / PCC 7942 / FACHB-805) (Anacystis nidulans R2).